The primary structure comprises 296 residues: Light-independent protochlorophyllide reductase iron-sulfur ATP-binding protein (296 aa).

ATP contacts are provided by residues Gly-39–Thr-44 and Lys-68. Ser-43 is a binding site for Mg(2+). Cys-124 and Cys-158 together coordinate [4Fe-4S] cluster. Asn-209 to Arg-210 provides a ligand contact to ATP.

It belongs to the NifH/BchL/ChlL family. As to quaternary structure, homodimer. Protochlorophyllide reductase is composed of three subunits; ChlL, ChlN and ChlB. The cofactor is [4Fe-4S] cluster.

It catalyses the reaction chlorophyllide a + oxidized 2[4Fe-4S]-[ferredoxin] + 2 ADP + 2 phosphate = protochlorophyllide a + reduced 2[4Fe-4S]-[ferredoxin] + 2 ATP + 2 H2O. Its pathway is porphyrin-containing compound metabolism; chlorophyll biosynthesis (light-independent). Its function is as follows. Component of the dark-operative protochlorophyllide reductase (DPOR) that uses Mg-ATP and reduced ferredoxin to reduce ring D of protochlorophyllide (Pchlide) to form chlorophyllide a (Chlide). This reaction is light-independent. The L component serves as a unique electron donor to the NB-component of the complex, and binds Mg-ATP. The chain is Light-independent protochlorophyllide reductase iron-sulfur ATP-binding protein from Prochlorococcus marinus (strain MIT 9303).